The sequence spans 320 residues: Bifunctional ligase/repressor BirA (320 aa).

The H-T-H motif DNA-binding region spans 22–41; that stretch reads GEQLGERLGMSRAAINKHIQ. The BPL/LPL catalytic domain maps to 66–254; the sequence is LLDADRIHSQ…KLRAALELFE (189 aa). Residues 89-91, Gln112, 116-118, and Lys183 each bind biotin; these read STN and RGR.

Belongs to the biotin--protein ligase family.

It catalyses the reaction biotin + L-lysyl-[protein] + ATP = N(6)-biotinyl-L-lysyl-[protein] + AMP + diphosphate + H(+). Its function is as follows. Acts both as a biotin--[acetyl-CoA-carboxylase] ligase and a biotin-operon repressor. In the presence of ATP, BirA activates biotin to form the BirA-biotinyl-5'-adenylate (BirA-bio-5'-AMP or holoBirA) complex. HoloBirA can either transfer the biotinyl moiety to the biotin carboxyl carrier protein (BCCP) subunit of acetyl-CoA carboxylase, or bind to the biotin operator site and inhibit transcription of the operon. This Salmonella typhimurium (strain LT2 / SGSC1412 / ATCC 700720) protein is Bifunctional ligase/repressor BirA.